We begin with the raw amino-acid sequence, 228 residues long: DNA-binding response regulator MtrA (228 aa).

In terms of domain architecture, Response regulatory spans 7-120 (RILVVDDDAS…ELVARVRARL (114 aa)). Position 56 is a 4-aspartylphosphate (aspartate 56). Positions 128–227 (AEMLSIADVE…VRGVGYKAGP (100 aa)) form a DNA-binding region, ompR/PhoB-type.

Phosphorylated by MtrB.

Member of the two-component regulatory system MtrA/MtrB. This is DNA-binding response regulator MtrA (mtrA) from Mycobacterium bovis (strain ATCC BAA-935 / AF2122/97).